Consider the following 487-residue polypeptide: Homoserine O-acetyltransferase (487 aa).

The AB hydrolase-1 domain occupies 45–352 (NVILVCHPLT…PHGHDGFLLE (308 aa)). Catalysis depends on S150, which acts as the Nucleophile. R219 lines the substrate pocket. Active-site residues include D313 and H346. Substrate is bound at residue D347. CBS domains lie at 373–430 (MTNN…FQDL) and 434–487 (MTKD…EVLQ).

The protein belongs to the AB hydrolase superfamily. MetX family. In terms of assembly, homodimer.

It localises to the cytoplasm. The enzyme catalyses L-homoserine + acetyl-CoA = O-acetyl-L-homoserine + CoA. It functions in the pathway amino-acid biosynthesis; L-methionine biosynthesis via de novo pathway; O-acetyl-L-homoserine from L-homoserine: step 1/1. Its function is as follows. Transfers an acetyl group from acetyl-CoA to L-homoserine, forming acetyl-L-homoserine. The sequence is that of Homoserine O-acetyltransferase from Methanocorpusculum labreanum (strain ATCC 43576 / DSM 4855 / Z).